Reading from the N-terminus, the 28-residue chain is GLKDWWNKHKDKIIDVVKEMGKAGLQAA.

Ala-28 carries the post-translational modification Alanine amide.

Expressed by the venom gland.

It localises to the secreted. In terms of biological role, the synthetic peptide has antimicrobial activity against the Gram-positive bacteria B.amyloliquefacies S499 (MIC=0.05 mM), L.monocytogenes 2231 and S.aureus ATCC 29213, against the Gram-negative bacteria P.putida BTP1, P.aeruginosa PaO1 and E.coli ATCC 10536, and against the fungi S.cerevisiae, R.mucilaginosa and C.cucumerinum. It is not active against the fungi F.oxysporum and B.cinerea. The sequence is that of M-poneritoxin-Da4b from Dinoponera australis (Giant neotropical hunting ant).